A 160-amino-acid polypeptide reads, in one-letter code: Protein MGF 300-2R (160 aa).

The protein belongs to the asfivirus MGF 300 family.

In terms of biological role, plays a role in virus cell tropism, and may be required for efficient virus replication in macrophages. In African swine fever virus (isolate Tick/Malawi/Lil 20-1/1983) (ASFV), this protein is Protein MGF 300-2R.